Reading from the N-terminus, the 174-residue chain is Gamma-crystallin D (174 aa).

2 Beta/gamma crystallin 'Greek key' domains span residues glycine 2 to serine 40 and glycine 41 to proline 83. The segment at histidine 84–serine 87 is connecting peptide. 2 consecutive Beta/gamma crystallin 'Greek key' domains span residues histidine 88–glutamate 128 and glycine 129–methionine 171.

This sequence belongs to the beta/gamma-crystallin family. In terms of tissue distribution, detected in the superior olivary complex of the auditory hindbrain.

In terms of biological role, crystallins are the dominant structural components of the vertebrate eye lens. The chain is Gamma-crystallin D (Crygd) from Mus musculus (Mouse).